We begin with the raw amino-acid sequence, 186 residues long: Prorelaxin 1 (186 aa).

The N-terminal stretch at 1 to 22 is a signal peptide; it reads MSSRLLLQLLGFWLFLSQPCRA. Disulfide bonds link Cys36-Cys173, Cys48-Cys186, and Cys172-Cys177. The propeptide at 58-158 is connecting peptide; that stretch reads SQEEPAPLAR…LKYLGSDAQS (101 aa). Gln163 carries the post-translational modification Pyrrolidone carboxylic acid.

The protein belongs to the insulin family. As to quaternary structure, heterodimer of a B chain and an A chain linked by two disulfide bonds.

It is found in the secreted. In terms of biological role, relaxin is an ovarian hormone that acts with estrogen to produce dilatation of the birth canal in many mammals. The sequence is that of Prorelaxin 1 (Rln1) from Rattus norvegicus (Rat).